A 132-amino-acid polypeptide reads, in one-letter code: Large ribosomal subunit protein uL14 (132 aa).

This sequence belongs to the universal ribosomal protein uL14 family. As to quaternary structure, part of the 50S ribosomal subunit. Forms a cluster with proteins L3 and L24e, part of which may contact the 16S rRNA in 2 intersubunit bridges.

Binds to 23S rRNA. Forms part of two intersubunit bridges in the 70S ribosome. The chain is Large ribosomal subunit protein uL14 from Methanoregula boonei (strain DSM 21154 / JCM 14090 / 6A8).